Consider the following 230-residue polypeptide: Uracil-DNA glycosylase (230 aa).

The Proton acceptor role is filled by D70.

The protein belongs to the uracil-DNA glycosylase (UDG) superfamily. UNG family.

The protein resides in the cytoplasm. The enzyme catalyses Hydrolyzes single-stranded DNA or mismatched double-stranded DNA and polynucleotides, releasing free uracil.. Functionally, excises uracil residues from the DNA which can arise as a result of misincorporation of dUMP residues by DNA polymerase or due to deamination of cytosine. The chain is Uracil-DNA glycosylase from Pseudomonas putida (strain GB-1).